The chain runs to 186 residues: ATP synthase subunit delta (186 aa).

It belongs to the ATPase delta chain family. As to quaternary structure, F-type ATPases have 2 components, F(1) - the catalytic core - and F(0) - the membrane proton channel. F(1) has five subunits: alpha(3), beta(3), gamma(1), delta(1), epsilon(1). CF(0) has four main subunits: a(1), b(1), b'(1) and c(10-14). The alpha and beta chains form an alternating ring which encloses part of the gamma chain. F(1) is attached to F(0) by a central stalk formed by the gamma and epsilon chains, while a peripheral stalk is formed by the delta, b and b' chains.

Its subcellular location is the cell inner membrane. In terms of biological role, f(1)F(0) ATP synthase produces ATP from ADP in the presence of a proton or sodium gradient. F-type ATPases consist of two structural domains, F(1) containing the extramembraneous catalytic core and F(0) containing the membrane proton channel, linked together by a central stalk and a peripheral stalk. During catalysis, ATP synthesis in the catalytic domain of F(1) is coupled via a rotary mechanism of the central stalk subunits to proton translocation. Functionally, this protein is part of the stalk that links CF(0) to CF(1). It either transmits conformational changes from CF(0) to CF(1) or is implicated in proton conduction. In Rhodopseudomonas palustris (strain ATCC BAA-98 / CGA009), this protein is ATP synthase subunit delta.